Consider the following 406-residue polypeptide: Biofilm regulatory protein A (406 aa).

A signal peptide spans 1–26 (MKIGKKILIMLVTIFLTSLVALGVYA). The segment covering 347 to 397 (SSSASDYSSSGNYSGSSSDYGSSSSYGSNSSSGSSSDYSGQNSYNQGNYQQ) has biased composition (low complexity). Positions 347-406 (SSSASDYSSSGNYSGSSSDYGSSSSYGSNSSSGSSSDYSGQNSYNQGNYQQPAAGTGIGN) are disordered.

Belongs to the LytR/CpsA/Psr (LCP) family.

Its subcellular location is the cell envelope. In terms of biological role, involved in biofilm formation, cell division, autolysis and the regulation of acid and oxidative stress tolerance. May be associated with systemic virulence in blood. This chain is Biofilm regulatory protein A (brpA), found in Streptococcus mutans serotype c (strain ATCC 700610 / UA159).